A 221-amino-acid polypeptide reads, in one-letter code: uncharacterized protein (221 aa).

4 helical membrane-spanning segments follow: residues 41-63 (TGNIRIGLIVLSLIGSYILHSLI), 78-100 (AVMYTISILLIIGLWTNVFSSLS), 141-163 (ILAYDLPNVLVFGCTSLFVISFL), and 178-200 (LILRSFIILILVISTILFLVNLF).

It is found in the cell membrane. This is an uncharacterized protein from Archaeoglobus fulgidus (strain ATCC 49558 / DSM 4304 / JCM 9628 / NBRC 100126 / VC-16).